The following is a 148-amino-acid chain: Small ribosomal subunit protein bS6 (148 aa).

The segment at 97–148 is disordered; the sequence is EEGPSAMLQRRDDRERGDRGDRGPRRDFDDRGPRRPREDDRPRRSREDEGDE.

Belongs to the bacterial ribosomal protein bS6 family.

Binds together with bS18 to 16S ribosomal RNA. This Chelativorans sp. (strain BNC1) protein is Small ribosomal subunit protein bS6.